The chain runs to 182 residues: NADH-quinone oxidoreductase subunit B 2 (182 aa).

[4Fe-4S] cluster-binding residues include Cys57, Cys58, Cys123, and Cys153.

It belongs to the complex I 20 kDa subunit family. In terms of assembly, NDH-1 is composed of 14 different subunits. Subunits NuoB, C, D, E, F, and G constitute the peripheral sector of the complex. The cofactor is [4Fe-4S] cluster.

It is found in the cell membrane. It catalyses the reaction a quinone + NADH + 5 H(+)(in) = a quinol + NAD(+) + 4 H(+)(out). Its function is as follows. NDH-1 shuttles electrons from NADH, via FMN and iron-sulfur (Fe-S) centers, to quinones in the respiratory chain. The immediate electron acceptor for the enzyme in this species is believed to be a menaquinone. Couples the redox reaction to proton translocation (for every two electrons transferred, four hydrogen ions are translocated across the cytoplasmic membrane), and thus conserves the redox energy in a proton gradient. This is NADH-quinone oxidoreductase subunit B 2 from Symbiobacterium thermophilum (strain DSM 24528 / JCM 14929 / IAM 14863 / T).